The sequence spans 1436 residues: Nuclear pore complex protein Nup160 (1436 aa).

4 positions are modified to phosphoserine: serine 44, serine 490, serine 949, and serine 1157.

In terms of assembly, part of the nuclear pore complex (NPC). Forms part of the NUP160 subcomplex in the nuclear pore which is composed of NUP160, NUP133, NUP107 and NUP96. This complex plays a role in RNA export and in tethering NUP98 and NUP153 to the nucleus.

Its subcellular location is the nucleus. The protein localises to the nuclear pore complex. In terms of biological role, functions as a component of the nuclear pore complex (NPC). Involved in poly(A)+ RNA transport. This Homo sapiens (Human) protein is Nuclear pore complex protein Nup160 (NUP160).